The chain runs to 784 residues: PWWP domain-containing protein 2A (784 aa).

Positions 1–10 (MAAVAAAPGP) are enriched in low complexity. Disordered regions lie at residues 1 to 29 (MAAV…EWRL), 399 to 443 (DHKV…KTQL), 468 to 570 (EKAQ…EIQD), and 609 to 655 (SSAS…SKEE). Positions 399-412 (DHKVNGKGQHESQK) are enriched in basic and acidic residues. The segment covering 433-442 (PSQTSAAKTQ) has biased composition (polar residues). Positions 684 to 744 (VGDIVWAKIY…LSQLAPFLEN (61 aa)) constitute a PWWP domain.

Its subcellular location is the nucleus. Functionally, H2A.Z-specific chromatin binding protein which plays an important role in the neural crest cell differentiation and/or migration during early development and is essential for the development of the head and eye. Acts as an adapter between distinct nucleosome components (H3K36me3 or H2A.Z) and chromatin-modifying complexes, contributing to the regulation of the levels of histone acetylation at actively transcribed genes. This chain is PWWP domain-containing protein 2A (pwwp2a), found in Xenopus laevis (African clawed frog).